A 479-amino-acid polypeptide reads, in one-letter code: uncharacterized protein (479 aa).

Transmembrane regions (helical) follow at residues 11–31 (ILMAIPLITFLLPAPDGLSLI), 43–63 (IVGLVLKPYGEPVILLAAIAV), 90–110 (GTTWLIFTAFTLSSAFVITGL), 151–171 (SGGIIFPIINSVVVALGSDPE), 195–215 (IFLTAMAPNALALSLMAPILG), 223–243 (WFLAASVPGLLCLFLIPLICY), 274–294 (KALSVLFVIALFGWIFSNSLH), 295–315 (INATIVAIIVMVLCIVLSIVT), 328–348 (TLVWYGGIIGMSGLLEKSGFF), and 447–467 (WWITGAIIAFGSLIIHLTIGM).

Belongs to the SLC13A/DASS transporter (TC 2.A.47) family. DIT1 subfamily.

It is found in the cell inner membrane. This is an uncharacterized protein from Haemophilus influenzae (strain ATCC 51907 / DSM 11121 / KW20 / Rd).